Here is a 345-residue protein sequence, read N- to C-terminus: S-adenosylmethionine:tRNA ribosyltransferase-isomerase (345 aa).

Belongs to the QueA family. In terms of assembly, monomer.

The protein localises to the cytoplasm. The catalysed reaction is 7-aminomethyl-7-carbaguanosine(34) in tRNA + S-adenosyl-L-methionine = epoxyqueuosine(34) in tRNA + adenine + L-methionine + 2 H(+). The protein operates within tRNA modification; tRNA-queuosine biosynthesis. In terms of biological role, transfers and isomerizes the ribose moiety from AdoMet to the 7-aminomethyl group of 7-deazaguanine (preQ1-tRNA) to give epoxyqueuosine (oQ-tRNA). The protein is S-adenosylmethionine:tRNA ribosyltransferase-isomerase of Shewanella sp. (strain MR-7).